We begin with the raw amino-acid sequence, 629 residues long: Dual specificity tyrosine-phosphorylation-regulated kinase 1B (629 aa).

Y63 carries the post-translational modification Phosphotyrosine. The segment at 67–86 is disordered; it reads KKRRAQQAPPQDSSTKKEKK. Residues 69 to 86 carry the Bipartite nuclear localization signal motif; it reads RRAQQAPPQDSSTKKEKK. Phosphotyrosine occurs at positions 92 and 111. In terms of domain architecture, Protein kinase spans 111-431; that stretch reads YEIDSLIGKG…PLGALQHGFF (321 aa). Residue 117–125 coordinates ATP; that stretch reads IGKGSFGQV. Position 129 is a phosphotyrosine (Y129). Residue K140 coordinates ATP. Phosphotyrosine is present on Y171. 190–193 contributes to the ATP binding site; sequence FELL. The active-site Proton acceptor is D239. S262 is modified (phosphoserine). At Y271 the chain carries Phosphotyrosine; by autocatalysis. Position 273 is a phosphotyrosine (Y273). The interval 380-399 is disordered; sequence GVQTGGPGGRRAGEPGHSPA. Y401 carries the post-translational modification Phosphotyrosine. Disordered regions lie at residues 436–480 and 496–629; these read DEAT…SNDN and PITD…AASS. A compositionally biased stretch (low complexity) spans 438 to 477; the sequence is ATNTGPAGSSASTSPAPLDTCPSSSTASSISSSGGSSGSS. The interval 480 to 520 is interaction with RANBP9; that stretch reads NRAYRYSNRYCGGPGPPITDCEMNSPQVLPSQPLRPWAGGD. 2 stretches are compositionally biased toward pro residues: residues 552–562 and 574–585; these read PPSPTSPPPPE and DCSPPPPAPAPQ. S624 is modified (phosphoserine).

Belongs to the protein kinase superfamily. CMGC Ser/Thr protein kinase family. MNB/DYRK subfamily. Dimer. Interacts with DCOHM, MAP2K3/MKK3, RANBP9 and TCF1/HNF1A. Part of a complex consisting of RANBP9, RAN, DYRK1B and COPS5. Interacts with DCAF7. Interacts with RNF169. In terms of processing, phosphorylated by MAP kinase. Tyrosine phosphorylation may be required for dimerization. As to expression, isoform 1 and isoform 2 are broadly expressed. Isoform 3 seems specific for skeletal muscle (at protein level).

Its subcellular location is the nucleus. The protein resides in the nucleolus. The protein localises to the chromosome. It carries out the reaction L-seryl-[protein] + ATP = O-phospho-L-seryl-[protein] + ADP + H(+). The enzyme catalyses L-threonyl-[protein] + ATP = O-phospho-L-threonyl-[protein] + ADP + H(+). It catalyses the reaction L-tyrosyl-[protein] + ATP = O-phospho-L-tyrosyl-[protein] + ADP + H(+). With respect to regulation, inhibited by RANBP9. In terms of biological role, dual-specificity kinase which possesses both serine/threonine and tyrosine kinase activities. Plays an essential role in ribosomal DNA (rDNA) double-strand break repair and rDNA copy number maintenance. During DNA damage, mediates transcription silencing in part via phosphorylating and enforcing DSB accumulation of the histone methyltransferase EHMT2. Enhances the transcriptional activity of TCF1/HNF1A and FOXO1. Inhibits epithelial cell migration. Mediates colon carcinoma cell survival in mitogen-poor environments. Inhibits the SHH and WNT1 pathways, thereby enhancing adipogenesis. In addition, promotes expression of the gluconeogenic enzyme glucose-6-phosphatase catalytic subunit 1 (G6PC1). The protein is Dual specificity tyrosine-phosphorylation-regulated kinase 1B (Dyrk1b) of Mus musculus (Mouse).